A 479-amino-acid polypeptide reads, in one-letter code: Adenylate kinase 8 (479 aa).

2 adenylate kinase regions span residues 58 to 258 (PRIV…TYVQ) and 269 to 471 (PRVL…SGII). Residue 67–72 (ASGKTT) coordinates ATP. The tract at residues 87–113 (TLENLILNEFSYTATEARRLYLQRKTV) is NMP 1. Residues 140–143 (GIPE), Gln147, and Arg203 each bind AMP. The interval 177–206 (GKRIDPQTGEIYHTTFDWPPESEIQNRLMV) is LID 1. 278-283 (GSGKSL) contacts ATP. The NMP 2 stretch occupies residues 298 to 327 (CCGQLLKEAVADRTTFGELIQPFFEKEMAV). AMP-binding positions include 325 to 327 (MAV), 354 to 357 (GVPR), and Gln361. An LID 2 region spans residues 391–424 (LRRIDPVTGERYHLMYKPPPTMEIQARLLQNPKD). Arg392 contacts ATP.

It belongs to the adenylate kinase family. Interacts with CFAP45 and CFAP52; CFAP45 and AK8 dimerization may create a cavity at the interface of the dimer that can accommodate AMP. In terms of tissue distribution, expressed in respiratory cells (at protein level).

The protein resides in the cytoplasm. It localises to the cytosol. It is found in the cytoskeleton. The protein localises to the cilium axoneme. It catalyses the reaction AMP + ATP = 2 ADP. The enzyme catalyses a 2'-deoxyribonucleoside 5'-diphosphate + ATP = a 2'-deoxyribonucleoside 5'-triphosphate + ADP. The catalysed reaction is a ribonucleoside 5'-diphosphate + ATP = a ribonucleoside 5'-triphosphate + ADP. Functionally, nucleoside monophosphate (NMP) kinase that catalyzes the reversible transfer of the terminal phosphate group between nucleoside triphosphates and monophosphates. Has highest activity toward AMP, and weaker activity toward dAMP, CMP and dCMP. Also displays broad nucleoside diphosphate kinase activity. This chain is Adenylate kinase 8 (AK8), found in Homo sapiens (Human).